Consider the following 144-residue polypeptide: MADDDYNEVDDLGYEDEPAEPEIEEGVEEDADIKENDDVNVDPLETEDKVETEPVQRPRKTSKFMTKYERARILGTRALQISMNAPVMVELEGETDPLEIAMKELRQRKIPFTIRRYLPDMSYEEWGVDELIVEDSWKRQVGGD.

Residues 1–32 (MADDDYNEVDDLGYEDEPAEPEIEEGVEEDAD) show a composition bias toward acidic residues. The interval 1 to 62 (MADDDYNEVD…EPVQRPRKTS (62 aa)) is disordered. Residues 46 to 56 (TEDKVETEPVQ) show a composition bias toward basic and acidic residues.

It belongs to the archaeal Rpo6/eukaryotic RPB6 RNA polymerase subunit family. As to quaternary structure, component of the RNA polymerase II and V complexes.

It localises to the nucleus. In terms of biological role, DNA-dependent RNA polymerase catalyzes the transcription of DNA into RNA using the four ribonucleoside triphosphates as substrates. Component of RNA polymerase II which synthesizes mRNA precursors and many functional non-coding RNAs. Pol II is the central component of the basal RNA polymerase II transcription machinery. It is composed of mobile elements that move relative to each other. Component of RNA polymerase V which mediates RNA-directed DNA methylation-dependent (RdDM) transcriptional gene silencing (TGS) of endogenous repeated sequences, including transposable elements. The sequence is that of DNA-directed RNA polymerases II and V subunit 6B (NRPB6B) from Arabidopsis thaliana (Mouse-ear cress).